A 2009-amino-acid chain; its full sequence is MDVTVSQLVELFLQSPLVTWVKTFGSFGSGHQDNLTLYMDLVDGIFLNQIMLQIDPRPSNQRINKHVNNDVNLRIQNLSILVRNIKTYYQEVLQQLIVMNLPNVLMIGKDPLSGKSMEEIKKVLLLVLGCAVQCERKEEFIERIKQLDIETQAGIVAHIQEVTHNQENVFDLQWLDLPDVAPEELEALSRNMVFHLRRLIDERDECTELIVDLTQERDYLQTQQPPSPGKFSSPDSTPSPTSSLSSEDKQHLAVELADTKARLRRVRQELEEKTEQLADTRHEVDQLVLELQKAKQDNIQLAADARSARAYRDELDSLREKANRVERLEMDLVRCKEKLHDVDFYKARMEELREDNIILIETKAMLEEQLTASRARSDKVHELEKENLQLKSKLHDLELDRDADKKQIEKLLEEYMVLEMAQKQSMKESAHLGWELEQLSKNADLSDASRKSFVFELNECASSRILKLEKENQSLQSTIQGLRDTSLALEESSLKYGELEKENQQLSKKIEKLQTQLEREKQSNQDLETLSEELIREKEQLQSGMEALKADRARQIKDLEQEKGHLHQAVWSLRERPQVNSTKDVEKENRALHQAVTEAGSKLSQLELEKQQLHRDLEEAKEKGEQAEALEKELHRLEKENEQLTKEVTSLKAATEKVEALEHQSQGLELENRSLRKSLDTLQNVSVQLEGLERDKQQLGQENLELRKMVEAMRFTSAKMAQIETENRQLEREKEELRRDVELLKTLSKKSERLELSYQSVSAENLQLQHSLESSTHKSQALQRELSQLEAERQALRRDLETLQLTHKQLEGAEEDRKALEQEVAQLEKDKKLLEKEARRLWQQVELKDAILDDSAAKLSAAEKESRALDKELARCRDVGSKLKELEKDNRDLTKQVTMHTRTLTTLREDLVLEKLKSQQLSSELDKLSQELEKVGLSKDLLLQEDDGHGDGKGKTESALKTTLAMKEEKIVFLEAQVEEKESLSRQLQIELQMIKKEHEQLRQTQEGGDKAQNALKRPPGKVTSHQEKEAWEPSHKEATMELLRVKDRAIELERSNAALQAERQLLKEQLQHLETQNVSFSSQILTLQKQSAFLQEHTTTLQTQTAKLQVENSTLSSQNAALSAQYTVLQSQQAAKEAEHEGLQQQQEQLAAVYEALLQDHKHLGTLYECQSSEYEALIRQHSCLKTLHRNLELEHKELGERHGDLQQRKAELEELEKVLSTEREALEREQKTNAIATSENQRLRGELDRISFLHQQLKGEYEELHAHTKELKTSLNNSQLELSRWQVRFDELKEQHQSMDISLTKMDNHCELLSRLKGNLEEENHHLLSQIQLLSQQNQMLLEQNMESKEQYHEEQKQYIDKLNALRRHKEKLEEKIMDQYKFYDPAPKKKNHWIGAKALVKLIKPKKEGSRERLKSTTDSPPWQLEPSDPASPSPSQALRSQTENPDNPPSGPNCVEERDTHNGPVGKGPGDLKPKRGSPRGGSVDRTDTSTDPAVKSWPSEPGSRTFSTSATTAALSSSTPIPKHLGRTKGCNSDDNLCEPSSEPDGPYHRQQASRPNSLESSRNASSNSSPLSLKGSSDHLHSRCESFSSADLIPSRDPATLSRDGNTSGRGLLGRHEYPPPRNGPVSQETIQKKGAASTHTGVRPHSASPSSEMVTLEEFLEESNRGGSPTHDTPSCRDDLLSDYFRKAHDPPALGGQPGPPARKDGAKMPTSFVAPTIKMSINTSEGQQLKPGHYVKPNLRPSEAEALAGMPSRQVQPPQSLSLGRPRQTTMTQNCHMPVSRSASLSRAFSLASADLLRASGPEACRPESPQKPGGHEAAGARETSTHSLQGSHILARERTPIVGKADSPSPGQGTRGRPLDTRRFSLAPPKEERLAPLQQSATAPALATGCSSGSNPQIQHFSPTVAPAVRTKSKVPQHSGEVATVAPVRPGLGTSEGDGGPGHGYSEGLLTKSPGRSSDLPPHVKRGPDDFSQGSSSKSTPASPEPGGDPQTVWYEYGCV.

Residues 11-131 (LFLQSPLVTW…KVLLLVLGCA (121 aa)) form the Calponin-homology (CH) domain. The interval 221 to 251 (QTQQPPSPGKFSSPDSTPSPTSSLSSEDKQH) is disordered. Phosphoserine occurs at positions 227 and 239. The segment covering 232–245 (SSPDSTPSPTSSLS) has biased composition (low complexity). Coiled coils occupy residues 247–425 (EDKQ…QKQS) and 456–1008 (ELNE…TQEG). Ser486 carries the phosphoserine modification. Residues 1002–1036 (LRQTQEGGDKAQNALKRPPGKVTSHQEKEAWEPSH) are disordered. Positions 1025 to 1036 (SHQEKEAWEPSH) are enriched in basic and acidic residues. A coiled-coil region spans residues 1190–1384 (HRNLELEHKE…LEEKIMDQYK (195 aa)). The span at 1410–1419 (KEGSRERLKS) shows a compositional bias: basic and acidic residues. 2 disordered regions span residues 1410–1716 (KEGS…GAKM) and 1757–1787 (GMPS…HMPV). Over residues 1430 to 1439 (PSDPASPSPS) the composition is skewed to low complexity. Position 1435 is a phosphoserine (Ser1435). Over residues 1440–1449 (QALRSQTENP) the composition is skewed to polar residues. Composition is skewed to low complexity over residues 1510–1524 (TFST…SSST) and 1562–1581 (NSLE…SLKG). Residue Ser1592 is modified to Phosphoserine. Positions 1652-1683 (HSASPSSEMVTLEEFLEESNRGGSPTHDTPSC) match the GBA motif. Over residues 1681–1697 (PSCRDDLLSDYFRKAHD) the composition is skewed to basic and acidic residues. The segment covering 1761–1783 (RQVQPPQSLSLGRPRQTTMTQNC) has biased composition (polar residues). Ser1798 carries the phosphoserine modification. Positions 1808–2009 (SGPEACRPES…QTVWYEYGCV (202 aa)) are disordered. Positions 1866-1883 (RPLDTRRFSLAPPKEERL) are enriched in basic and acidic residues. A compositionally biased stretch (polar residues) spans 1898-1911 (GCSSGSNPQIQHFS). Residues 1943-1954 (TSEGDGGPGHGY) show a composition bias toward gly residues. Polar residues predominate over residues 1981–1991 (SQGSSSKSTPA). The short motif at 2006 to 2009 (YGCV) is the PDZ-binding element. Positions 2007–2009 (GCV) are DVL1-binding.

Belongs to the CCDC88 family. In terms of assembly, homooligomer. Interacts with DVL1 (via PDZ domain); dissociates following initiation of non-canonical Wnt signaling. Interacts (via C-terminus) with ligand-activated Wnt receptor FZD7; competes with DVL1 for binding to FZD7 and displaces DVL1 from ligand-activated FZD7. Interacts (via GBA motif) with guanine nucleotide-binding protein G(i) alpha subunits GNAI1, GNAI2 and GNAI3 (inactive GDP-bound form); interacts with higher affinity with GNAI1 and GNAI3 than with GNAI2 and interaction leads to G(i) alpha subunit activation. Does not interact with GNAO1.

The protein localises to the cytoplasm. The protein resides in the cell junction. In terms of biological role, required for activation of guanine nucleotide-binding proteins (G-proteins) during non-canonical Wnt signaling. Binds to ligand-activated Wnt receptor FZD7, displacing DVL1 from the FZD7 receptor and leading to inhibition of canonical Wnt signaling. Acts as a non-receptor guanine nucleotide exchange factor by also binding to guanine nucleotide-binding protein G(i) alpha (Gi-alpha) subunits, leading to their activation. Binding to Gi-alpha subunits displaces the beta and gamma subunits from the heterotrimeric G-protein complex, triggering non-canonical Wnt responses such as activation of RAC1 and PI3K-AKT signaling. Promotes apical constriction of cells via ARHGEF18. The sequence is that of Protein Daple (Ccdc88c) from Mus musculus (Mouse).